The following is an 85-amino-acid chain: Mitochondrial protein pet191 homolog (85 aa).

The CHCH domain occupies 18–61; the sequence is HSDCMFVKKKSARECLKNKDELPEECKNLIEAYGECKRQMLDMT. Residues 21-32 carry the Cx10C motif motif; the sequence is CMFVKKKSAREC. 2 disulfides stabilise this stretch: cysteine 21–cysteine 53 and cysteine 32–cysteine 43. The short motif at 43-53 is the Cx9C motif element; sequence CKNLIEAYGEC. The tract at residues 65 to 85 is disordered; that stretch reads RIAPEKNTDQDTEKPSNVDEQ.

It belongs to the PET191 family.

It localises to the mitochondrion. Involved in the assembly of cytochrome c oxidase. The protein is Mitochondrial protein pet191 homolog of Schizosaccharomyces pombe (strain 972 / ATCC 24843) (Fission yeast).